Reading from the N-terminus, the 260-residue chain is Cytochrome c1-2, heme protein, mitochondrial (260 aa).

The N-terminal 17 residues, I1–A17, are a transit peptide targeting the mitochondrion. The Mitochondrial intermembrane segment spans residues D18–K221. A Cytochrome c domain is found at A43–L150. Positions 56, 59, 60, and 179 each coordinate heme c. Residues L222–Y241 form a helical membrane-spanning segment. Over R242–N260 the chain is Mitochondrial matrix.

It belongs to the cytochrome c family. As to quaternary structure, component of the ubiquinol-cytochrome c oxidoreductase (cytochrome b-c1 complex, complex III, CIII), a multisubunit enzyme composed of 3 respiratory subunits cytochrome b, cytochrome c1 and Rieske protein, 2 core protein subunits, and additional low-molecular weight protein subunits. The complex exists as an obligatory dimer and forms supercomplexes (SCs) in the inner mitochondrial membrane with cytochrome c oxidase (complex IV, CIV). Heme c is required as a cofactor. In terms of tissue distribution, in all tissues analyzed.

The protein localises to the mitochondrion inner membrane. The catalysed reaction is a quinol + 2 Fe(III)-[cytochrome c](out) = a quinone + 2 Fe(II)-[cytochrome c](out) + 2 H(+)(out). In terms of biological role, component of the ubiquinol-cytochrome c oxidoreductase, a multisubunit transmembrane complex that is part of the mitochondrial electron transport chain which drives oxidative phosphorylation. The respiratory chain contains 3 multisubunit complexes succinate dehydrogenase (complex II, CII), ubiquinol-cytochrome c oxidoreductase (cytochrome b-c1 complex, complex III, CIII) and cytochrome c oxidase (complex IV, CIV), that cooperate to transfer electrons derived from NADH and succinate to molecular oxygen, creating an electrochemical gradient over the inner membrane that drives transmembrane transport and the ATP synthase. The cytochrome b-c1 complex catalyzes electron transfer from ubiquinol to cytochrome c, linking this redox reaction to translocation of protons across the mitochondrial inner membrane, with protons being carried across the membrane as hydrogens on the quinol. In the process called Q cycle, 2 protons are consumed from the matrix, 4 protons are released into the intermembrane space and 2 electrons are passed to cytochrome c. Cytochrome c1 is a catalytic core subunit containing a c-type heme. It transfers electrons from the [2Fe-2S] iron-sulfur cluster of the Rieske protein to cytochrome c. The chain is Cytochrome c1-2, heme protein, mitochondrial (CYCL) from Solanum tuberosum (Potato).